The following is a 272-amino-acid chain: Shikimate dehydrogenase (NADP(+)) (272 aa).

Shikimate-binding positions include 14–16 (SKS) and threonine 61. Residue lysine 65 is the Proton acceptor of the active site. NADP(+) is bound at residue glutamate 77. The shikimate site is built by asparagine 86 and aspartate 102. NADP(+) contacts are provided by residues 126–130 (GAGGA), 149–154 (NRTVSR), and methionine 213. Tyrosine 215 provides a ligand contact to shikimate. NADP(+) is bound at residue glycine 237.

It belongs to the shikimate dehydrogenase family. As to quaternary structure, homodimer.

It catalyses the reaction shikimate + NADP(+) = 3-dehydroshikimate + NADPH + H(+). The protein operates within metabolic intermediate biosynthesis; chorismate biosynthesis; chorismate from D-erythrose 4-phosphate and phosphoenolpyruvate: step 4/7. Its function is as follows. Involved in the biosynthesis of the chorismate, which leads to the biosynthesis of aromatic amino acids. Catalyzes the reversible NADPH linked reduction of 3-dehydroshikimate (DHSA) to yield shikimate (SA). The chain is Shikimate dehydrogenase (NADP(+)) from Escherichia coli O45:K1 (strain S88 / ExPEC).